A 503-amino-acid polypeptide reads, in one-letter code: Putative (R)-citramalate synthase CimA (503 aa).

One can recognise a Pyruvate carboxyltransferase domain in the interval Ile-9 to Tyr-257.

It belongs to the alpha-IPM synthase/homocitrate synthase family. In terms of assembly, homodimer.

It carries out the reaction pyruvate + acetyl-CoA + H2O = (3R)-citramalate + CoA + H(+). Its pathway is amino-acid biosynthesis; L-isoleucine biosynthesis; 2-oxobutanoate from pyruvate: step 1/3. Catalyzes the condensation of pyruvate and acetyl-coenzyme A to form (R)-citramalate. The chain is Putative (R)-citramalate synthase CimA from Methanoculleus marisnigri (strain ATCC 35101 / DSM 1498 / JR1).